Here is a 347-residue protein sequence, read N- to C-terminus: Protein RecA (347 aa).

68–75 (GPESSGKT) contacts ATP.

The protein belongs to the RecA family.

It is found in the cytoplasm. In terms of biological role, can catalyze the hydrolysis of ATP in the presence of single-stranded DNA, the ATP-dependent uptake of single-stranded DNA by duplex DNA, and the ATP-dependent hybridization of homologous single-stranded DNAs. It interacts with LexA causing its activation and leading to its autocatalytic cleavage. The polypeptide is Protein RecA (Rhodococcus jostii (strain RHA1)).